We begin with the raw amino-acid sequence, 324 residues long: Methionyl-tRNA formyltransferase (324 aa).

112-115 contacts (6S)-5,6,7,8-tetrahydrofolate; it reads SILP.

It belongs to the Fmt family.

The enzyme catalyses L-methionyl-tRNA(fMet) + (6R)-10-formyltetrahydrofolate = N-formyl-L-methionyl-tRNA(fMet) + (6S)-5,6,7,8-tetrahydrofolate + H(+). Functionally, attaches a formyl group to the free amino group of methionyl-tRNA(fMet). The formyl group appears to play a dual role in the initiator identity of N-formylmethionyl-tRNA by promoting its recognition by IF2 and preventing the misappropriation of this tRNA by the elongation apparatus. The chain is Methionyl-tRNA formyltransferase from Shewanella loihica (strain ATCC BAA-1088 / PV-4).